We begin with the raw amino-acid sequence, 950 residues long: MTQVNLGTANEFIARHIGPRAGDEQAMLNSLGFDSLEALSASVIPESIKGTSVLGLDDGLSEADALAMIKGIAGKNQLFKTYIGQGYYNCHTPSPILRNLLENPAWYTAYTPYQPEISQGRLEALLNFQTLISDLTGLPIANASLLDEATAAAEAMTFCKRLSKNKGSHQFFASIHSHTQTLDVLRTRAEPLGIDVVVGDERELTDVTPFFGALLQYPASNGDVFDYRELTERFHAANALVAVAADLLALTLLTPPGEFGADVAIGSAQRFGVPLGFGGPHAAYFSTKDAFKRDMPGRLVGVSVDRFGKPALRLAMQTREQHIRREKATSNICTAQVLLANIASMYAVYHGPKGLTQIANRVHHLTAILAKGLSALGVTVEQTSFFDTLTLATGAQTAALHDKARAQQINLRVIDAQRLGLSVDETTTQADIETLWGLFADGKTLPDFAALAAAAQSTIPASLVRQSPILSHPVFNRYHSETELMRYLRKLADKDLALDRTMIPLGSCTMKLNAASEMIPVTWAEFGALHPFAPAEQSAGYQQLTDELEAMLCAATGYDSISLQPNAGSQGEYAGLLAIRAYHQSRGEDRRDICLIPSSAHGTNPATANMAGMRVVVTACDARGNVDIEDLRAKAIEHREHLAALMITYPSTHGVFEEGIREICGIIHDNGGQVYIDGANMNAMVGLCAPGKFGGDVSHLNLHKTFCIPHGGGGPGVGPIGVKSHLTPFLPGHGHMERKEGAVCAAPFGSASILPITWMYIRMMGGAGLKRASQLAILNANYISRRLEEHYPVLYTGSNGLVAHECILDLRPLKDSSGISVDDVAKRLIDFGFHAPTMSFPVAGTLMIEPTESESKEELDRFCDAMIRIREEIRAVENGTLDKDDNPLKNAPHTAAELVGEWTHPYSREQAVYPVASLIEGKYWPPVGRVDNVFGDRNLVCACPSIESYA.

Lysine 704 is modified (N6-(pyridoxal phosphate)lysine).

It belongs to the GcvP family. As to quaternary structure, the glycine cleavage system is composed of four proteins: P, T, L and H. Requires pyridoxal 5'-phosphate as cofactor.

It catalyses the reaction N(6)-[(R)-lipoyl]-L-lysyl-[glycine-cleavage complex H protein] + glycine + H(+) = N(6)-[(R)-S(8)-aminomethyldihydrolipoyl]-L-lysyl-[glycine-cleavage complex H protein] + CO2. Functionally, the glycine cleavage system catalyzes the degradation of glycine. The P protein binds the alpha-amino group of glycine through its pyridoxal phosphate cofactor; CO(2) is released and the remaining methylamine moiety is then transferred to the lipoamide cofactor of the H protein. The protein is Glycine dehydrogenase (decarboxylating) 1 of Pseudomonas fluorescens (strain Pf0-1).